The primary structure comprises 195 residues: Myelin-associated neurite-outgrowth inhibitor (195 aa).

Residues 1-18 (MNPVYSPASSGVPYANPK) lie on the Cytoplasmic side of the membrane. Residues 19–43 (GIGYPAGFPVGYAAAAPAYSPSMYP) traverse the membrane as a helical segment. Residues 44 to 143 (GANPAFPSGY…APPIPPPRPN (100 aa)) are Extracellular-facing. Residues 144-163 (GVTMGMVGGTTMAMSAGTLL) traverse the membrane as a helical segment. Residues 164 to 195 (TTHSPTPVAPHPSMPTYRQPATPTYSYVPPQW) lie on the Cytoplasmic side of the membrane.

The protein belongs to the FAM168 family.

It localises to the cytoplasm. It is found in the perinuclear region. The protein localises to the cell membrane. Its subcellular location is the cell projection. The protein resides in the axon. In terms of biological role, inhibitor of neuronal axonal outgrowth. This Danio rerio (Zebrafish) protein is Myelin-associated neurite-outgrowth inhibitor (fam168b).